A 107-amino-acid polypeptide reads, in one-letter code: Chlorobenzene dioxygenase, ferredoxin component (107 aa).

A Rieske domain is found at 4 to 99; sequence TYIMRQSDLP…IKVEGGDVHV (96 aa). Positions 43, 45, 62, and 65 each coordinate [2Fe-2S] cluster.

Belongs to the bacterial ring-hydroxylating dioxygenase ferredoxin component family. In terms of assembly, this dioxygenase system consists of four proteins: the two subunits of the oxygenase component (TecA1 and TecA2), a ferredoxin (TecA3) and a ferredoxin reductase (TecA4). Requires [2Fe-2S] cluster as cofactor.

It functions in the pathway aromatic compound metabolism. Part of the chlorobenzene dioxygenase system that catalyzes the dihydroxylation of a range of aromatic compounds, including chlorinated benzenes and toluenes, and dinuclear aromatics such as biphenyl and dibenzo-p-dioxin. This is Chlorobenzene dioxygenase, ferredoxin component from Cupriavidus sp. (strain PS12).